A 391-amino-acid chain; its full sequence is Oxytocin receptor (391 aa).

The Extracellular portion of the chain corresponds to 1-38 (MEGAFAANWSAEAVNGSAAPPGTEGNRTAGPPQRNEAL). Residues N8, N15, and N26 are each glycosylated (N-linked (GlcNAc...) asparagine). The helical transmembrane segment at 39–63 (ARVEVAVLSLILFLALSGNACVLLA) threads the bilayer. At 64–74 (LRTTRHKHSRL) the chain is on the cytoplasmic side. The helical transmembrane segment at 75 to 97 (FFFMKHLSIADLAVAVFQVLPQL) threads the bilayer. The Extracellular portion of the chain corresponds to 98-113 (LWDITFRFYGPDLLCR). The cysteines at positions 112 and 187 are disulfide-linked. Residues 114–135 (LVKYLQVVGMFASTYLLLLMSL) traverse the membrane as a helical segment. At 136-154 (DRCLAICQPLRSLRRRTDR) the chain is on the cytoplasmic side. A helical membrane pass occupies residues 155 to 175 (LAVLATWLGCLVASAPQVHIF). The Extracellular portion of the chain corresponds to 176-202 (SLREVADGVFDCWAVFIQPWGPKAYIT). Residues 203–225 (WITLAVYIVPVIVLAACYGLISF) form a helical membrane-spanning segment. The Cytoplasmic segment spans residues 226–277 (KIWQNLRLKTEAAAAEASAGAEGAAADCAGRAALARVSNVKLISKAKIRTVK). The chain crosses the membrane as a helical span at residues 278–296 (MTFIVVLAFIVCWTPFFFK). Residues 297–311 (QMWSVWDADAPKEAS) lie on the Extracellular side of the membrane. The helical transmembrane segment at 312–334 (AFIIAMLLASLNSCCNPWIYMLF) threads the bilayer. Residues 335-391 (TGHLFQDLVQRFLCCSFRRLKGSQLGETSVTKKIHSYTFVLSRHSSSQRSCSQPSTV) lie on the Cytoplasmic side of the membrane. A Phosphoserine modification is found at S370.

It belongs to the G-protein coupled receptor 1 family. Vasopressin/oxytocin receptor subfamily.

It is found in the cell membrane. Functionally, receptor for oxytocin. The activity of this receptor is mediated by G proteins which activate a phosphatidylinositol-calcium second messenger system. The polypeptide is Oxytocin receptor (OXTR) (Ovis aries (Sheep)).